The primary structure comprises 468 residues: MVVGDFPIETDTIVIGAGPGGYVAAIRAAQLGQKVTIVEKGNLGGVCLNVGCIPSKALLHASHRFVEAQHSENLGVIAESVSLNFQKVQEFKSSVVNKLTGGVEGLLKGNKVNIVKGEAYFVDNNSLRVMDEKSAQTYNFKNAIIATGSRPIEIPNFKFGKRVIDSTGALNLQEVPGKLVVVGGGYIGSELGTAFANFGSEVTILEGAKDILGGFEKQMTQPVKKGMKEKGVEIVTEAMAKSAEETDNGVKVTYEAKGEEKTIEADYVLVTVGRRPNTDELGLEELGVKFADRGLLEVDKQSRTSISNIYAIGDIVPGLPLAHKASYEAKVAAEAIDGQAAEVDYIGMPAVCFTEPELATVGYSEAQAKEEGLAIKASKFPYAANGRALSLDDTNGFVKLITLKEDDTLIGAQVVGTGASDIISELGLAIEAGMNAEDIALTIHAHPTLGEMTMEAAEKAIGYPIHTM.

Residues 39–47 (EKGNLGGVC), K56, and A119 contribute to the FAD site. A disulfide bridge links C47 with C52. Residues 183-187 (GGGYI), E206, and 271-274 (TVGR) each bind NAD(+). FAD-binding residues include D314 and A322. The Proton acceptor role is filled by H446.

Belongs to the class-I pyridine nucleotide-disulfide oxidoreductase family. As to quaternary structure, homodimer. FAD serves as cofactor.

The protein localises to the cytoplasm. It localises to the membrane. It carries out the reaction N(6)-[(R)-dihydrolipoyl]-L-lysyl-[protein] + NAD(+) = N(6)-[(R)-lipoyl]-L-lysyl-[protein] + NADH + H(+). In terms of biological role, lipoamide dehydrogenase is a component of the alpha-ketoacid dehydrogenase complexes. The polypeptide is Dihydrolipoyl dehydrogenase (pdhD) (Staphylococcus aureus (strain COL)).